We begin with the raw amino-acid sequence, 194 residues long: Putative 3-methyladenine DNA glycosylase (194 aa).

It belongs to the DNA glycosylase MPG family.

The polypeptide is Putative 3-methyladenine DNA glycosylase (Synechococcus elongatus (strain ATCC 33912 / PCC 7942 / FACHB-805) (Anacystis nidulans R2)).